Consider the following 122-residue polypeptide: Small ribosomal subunit protein uS13 (122 aa).

The disordered stretch occupies residues 99 to 122; sequence RGQRTHTNARTRKGPAKAIAGKKK.

Belongs to the universal ribosomal protein uS13 family. In terms of assembly, part of the 30S ribosomal subunit. Forms a loose heterodimer with protein S19. Forms two bridges to the 50S subunit in the 70S ribosome.

Its function is as follows. Located at the top of the head of the 30S subunit, it contacts several helices of the 16S rRNA. In the 70S ribosome it contacts the 23S rRNA (bridge B1a) and protein L5 of the 50S subunit (bridge B1b), connecting the 2 subunits; these bridges are implicated in subunit movement. Contacts the tRNAs in the A and P-sites. The protein is Small ribosomal subunit protein uS13 of Rhizobium etli (strain ATCC 51251 / DSM 11541 / JCM 21823 / NBRC 15573 / CFN 42).